The chain runs to 232 residues: Ribonuclease 3 (232 aa).

Residues 10 to 135 enclose the RNase III domain; that stretch reads ALKIYEATGY…LIGAMYMDGG (126 aa). Residue glutamate 48 participates in Mg(2+) binding. Residue aspartate 52 is part of the active site. Asparagine 121 and glutamate 124 together coordinate Mg(2+). Glutamate 124 is an active-site residue. In terms of domain architecture, DRBM spans 161-230; the sequence is DPKTALQEWV…AKLMLKKITE (70 aa).

Belongs to the ribonuclease III family. In terms of assembly, homodimer. The cofactor is Mg(2+).

The protein resides in the cytoplasm. The catalysed reaction is Endonucleolytic cleavage to 5'-phosphomonoester.. Digests double-stranded RNA. Involved in the processing of primary rRNA transcript to yield the immediate precursors to the large and small rRNAs (23S and 16S). Processes some mRNAs, and tRNAs when they are encoded in the rRNA operon. Processes pre-crRNA and tracrRNA of type II CRISPR loci if present in the organism. This Anaplasma marginale (strain St. Maries) protein is Ribonuclease 3.